The primary structure comprises 349 residues: DNA replication and repair protein RecF (349 aa).

ATP is bound at residue 30–37 (GKNGSGKT).

This sequence belongs to the RecF family.

The protein resides in the cytoplasm. Its function is as follows. The RecF protein is involved in DNA metabolism; it is required for DNA replication and normal SOS inducibility. RecF binds preferentially to single-stranded, linear DNA. It also seems to bind ATP. The polypeptide is DNA replication and repair protein RecF (Francisella tularensis subsp. mediasiatica (strain FSC147)).